The primary structure comprises 146 residues: 3-dehydroquinate dehydratase (146 aa).

Catalysis depends on tyrosine 23, which acts as the Proton acceptor. Substrate contacts are provided by asparagine 74, histidine 80, and aspartate 87. Histidine 100 functions as the Proton donor in the catalytic mechanism. Substrate is bound by residues 101 to 102 (IS) and arginine 111.

The protein belongs to the type-II 3-dehydroquinase family. In terms of assembly, homododecamer.

It carries out the reaction 3-dehydroquinate = 3-dehydroshikimate + H2O. The protein operates within metabolic intermediate biosynthesis; chorismate biosynthesis; chorismate from D-erythrose 4-phosphate and phosphoenolpyruvate: step 3/7. Its function is as follows. Catalyzes a trans-dehydration via an enolate intermediate. This Bacillus mycoides (strain KBAB4) (Bacillus weihenstephanensis) protein is 3-dehydroquinate dehydratase.